The chain runs to 260 residues: Multiple myeloma tumor-associated protein 2 homolog (260 aa).

A compositionally biased stretch (gly residues) spans 1–11 (MFGSNRGGVRG). The segment at 1–21 (MFGSNRGGVRGGQDQFNWEDV) is disordered. Glycyl lysine isopeptide (Lys-Gly) (interchain with G-Cter in SUMO2) cross-links involve residues K22, K104, and K113. Residues 106–116 (EGGDPEEKGVD) are compositionally biased toward basic and acidic residues. 2 disordered regions span residues 106–133 (EGGD…RVAL) and 146–260 (SVFT…SSDD). Residues 117 to 132 (RLLGLGSASGSAGRVA) are compositionally biased toward low complexity. Phosphoserine occurs at positions 123 and 127. The span at 170 to 182 (RAEDKVEPDAESH) shows a compositional bias: basic and acidic residues. Residues 183–206 (KKSKKEKKKKKKKHKKHKKKKDKE) are compositionally biased toward basic residues. 3 positions are modified to phosphoserine: S215, S216, and S219.

This Mus musculus (Mouse) protein is Multiple myeloma tumor-associated protein 2 homolog (Mmtag2).